The primary structure comprises 283 residues: Probable endonuclease 4 (283 aa).

His69, His113, Glu148, Asp182, His185, His217, Asp230, His232, and Glu262 together coordinate Zn(2+).

The protein belongs to the AP endonuclease 2 family. Zn(2+) serves as cofactor.

It catalyses the reaction Endonucleolytic cleavage to 5'-phosphooligonucleotide end-products.. In terms of biological role, endonuclease IV plays a role in DNA repair. It cleaves phosphodiester bonds at apurinic or apyrimidinic (AP) sites, generating a 3'-hydroxyl group and a 5'-terminal sugar phosphate. In Bifidobacterium longum (strain DJO10A), this protein is Probable endonuclease 4.